We begin with the raw amino-acid sequence, 54 residues long: Metallothionein-4 (54 aa).

This sequence belongs to the metallothionein superfamily. Type 11 family.

This Yarrowia lipolytica (strain CLIB 122 / E 150) (Yeast) protein is Metallothionein-4 (MTP4).